Reading from the N-terminus, the 696-residue chain is C2 domain-containing protein 2 (696 aa).

The helical transmembrane segment at Ala13–Leu33 threads the bilayer. The SMP-LBD domain maps to Glu51–Leu242. A Phosphoserine modification is found at Ser60. The C2 domain maps to Ala245 to Phe362. Phosphoserine occurs at positions 435 and 441. At Thr445 the chain carries Phosphothreonine. Residues Val539 to Asp580 form a disordered region. Over residues Thr542–Arg553 the composition is skewed to basic and acidic residues. Low complexity predominate over residues Ala554–Pro572. The residue at position 581 (Ser581) is a Phosphoserine.

It is found in the membrane. The sequence is that of C2 domain-containing protein 2 (C2CD2) from Homo sapiens (Human).